The primary structure comprises 432 residues: Glutamyl-tRNA reductase (432 aa).

Substrate-binding positions include 49 to 52, S101, 106 to 108, and Q112; these read TCNR and EPQ. Catalysis depends on C50, which acts as the Nucleophile. 181 to 186 contributes to the NADP(+) binding site; that stretch reads GAGETI. The disordered stretch occupies residues 407–432; sequence FPEKPGYQHPPIATPIVRTDDADPAP.

The protein belongs to the glutamyl-tRNA reductase family. In terms of assembly, homodimer.

It catalyses the reaction (S)-4-amino-5-oxopentanoate + tRNA(Glu) + NADP(+) = L-glutamyl-tRNA(Glu) + NADPH + H(+). It participates in porphyrin-containing compound metabolism; protoporphyrin-IX biosynthesis; 5-aminolevulinate from L-glutamyl-tRNA(Glu): step 1/2. In terms of biological role, catalyzes the NADPH-dependent reduction of glutamyl-tRNA(Glu) to glutamate 1-semialdehyde (GSA). The sequence is that of Glutamyl-tRNA reductase from Xanthomonas oryzae pv. oryzae (strain MAFF 311018).